The following is a 348-amino-acid chain: MITLAVESMGGDQGLAVTVPGATAFLQAHPDVRLIMTGDETQLRQALNAAGAPMERIDICHTTQVVGMDESPQSALKNKKYSSMRVAINQVKEGKAQAAVSAGNTGALMATARFVLKTIPGIERPAIAKFLPSDTDHVTLALDLGANVDCTPEQLAQFAVIGSELVHALHPQKGQPRVGLVNVGTEDIKGTDTVKQTYKLLQNSKLNFIGNIESNGILYGEADVVVADGFVGNVMLKTIEGAVKFMSGAIRREFQSNLFNKLAAVAALPALKGLKNKLDPRKFNGAILLGLRGIVIKSHGGTDKTGFRYALEEAYHEAKSAGLSKIEQGVAEQLAALEAAQNETAASL.

It belongs to the PlsX family. As to quaternary structure, homodimer. Probably interacts with PlsY.

It localises to the cytoplasm. It carries out the reaction a fatty acyl-[ACP] + phosphate = an acyl phosphate + holo-[ACP]. It functions in the pathway lipid metabolism; phospholipid metabolism. Functionally, catalyzes the reversible formation of acyl-phosphate (acyl-PO(4)) from acyl-[acyl-carrier-protein] (acyl-ACP). This enzyme utilizes acyl-ACP as fatty acyl donor, but not acyl-CoA. The sequence is that of Phosphate acyltransferase from Neisseria gonorrhoeae (strain ATCC 700825 / FA 1090).